A 94-amino-acid polypeptide reads, in one-letter code: Co-chaperonin GroES (94 aa).

Belongs to the GroES chaperonin family. As to quaternary structure, heptamer of 7 subunits arranged in a ring. Interacts with the chaperonin GroEL.

The protein resides in the cytoplasm. Together with the chaperonin GroEL, plays an essential role in assisting protein folding. The GroEL-GroES system forms a nano-cage that allows encapsulation of the non-native substrate proteins and provides a physical environment optimized to promote and accelerate protein folding. GroES binds to the apical surface of the GroEL ring, thereby capping the opening of the GroEL channel. The polypeptide is Co-chaperonin GroES (Thermoanaerobacter pseudethanolicus (strain ATCC 33223 / 39E) (Clostridium thermohydrosulfuricum)).